The sequence spans 384 residues: Glutamate 5-kinase (384 aa).

ATP is bound at residue Lys-24. The substrate site is built by Ser-64, Asp-149, and Asn-161. Residues 181 to 182 and 223 to 229 each bind ATP; these read TD and TGGMRTK. In terms of domain architecture, PUA spans 288–370; sequence PGAILIDAGA…RDIQPLLGYT (83 aa).

This sequence belongs to the glutamate 5-kinase family.

It localises to the cytoplasm. The enzyme catalyses L-glutamate + ATP = L-glutamyl 5-phosphate + ADP. It participates in amino-acid biosynthesis; L-proline biosynthesis; L-glutamate 5-semialdehyde from L-glutamate: step 1/2. Functionally, catalyzes the transfer of a phosphate group to glutamate to form L-glutamate 5-phosphate. This Xylella fastidiosa (strain 9a5c) protein is Glutamate 5-kinase.